The sequence spans 806 residues: Phenylalanine--tRNA ligase beta subunit (806 aa).

In terms of domain architecture, tRNA-binding spans 39–154; sequence SAGLKKIVVG…EAIAPGTDVY (116 aa). Residues 410–485 enclose the B5 domain; that stretch reads PQPKVIQFDS…RLYGYDNLPS (76 aa). Aspartate 463, aspartate 469, glutamate 472, and glutamate 473 together coordinate Mg(2+). The FDX-ACB domain occupies 713-806; it reads PKFPEVTRDI…LVATFQAKVR (94 aa).

Belongs to the phenylalanyl-tRNA synthetase beta subunit family. Type 1 subfamily. In terms of assembly, tetramer of two alpha and two beta subunits. Requires Mg(2+) as cofactor.

The protein resides in the cytoplasm. The enzyme catalyses tRNA(Phe) + L-phenylalanine + ATP = L-phenylalanyl-tRNA(Phe) + AMP + diphosphate + H(+). This chain is Phenylalanine--tRNA ligase beta subunit, found in Latilactobacillus sakei subsp. sakei (strain 23K) (Lactobacillus sakei subsp. sakei).